We begin with the raw amino-acid sequence, 196 residues long: Holliday junction branch migration complex subunit RuvA (196 aa).

Positions 1 to 63 (MYEYFKGIIS…EDAELLYGFA (63 aa)) are domain I. The segment at 64–142 (TEEEKQLFLS…AAGSPAESKA (79 aa)) is domain II. Residues 143–146 (PVQT) form a flexible linker region. Positions 147-196 (ADNQELEEAMEAMLALGYKAAELKKIKKFFEGTTDTAENYIKSALKMLVK) are domain III.

It belongs to the RuvA family. Homotetramer. Forms an RuvA(8)-RuvB(12)-Holliday junction (HJ) complex. HJ DNA is sandwiched between 2 RuvA tetramers; dsDNA enters through RuvA and exits via RuvB. An RuvB hexamer assembles on each DNA strand where it exits the tetramer. Each RuvB hexamer is contacted by two RuvA subunits (via domain III) on 2 adjacent RuvB subunits; this complex drives branch migration. In the full resolvosome a probable DNA-RuvA(4)-RuvB(12)-RuvC(2) complex forms which resolves the HJ.

Its subcellular location is the cytoplasm. In terms of biological role, the RuvA-RuvB-RuvC complex processes Holliday junction (HJ) DNA during genetic recombination and DNA repair, while the RuvA-RuvB complex plays an important role in the rescue of blocked DNA replication forks via replication fork reversal (RFR). RuvA specifically binds to HJ cruciform DNA, conferring on it an open structure. The RuvB hexamer acts as an ATP-dependent pump, pulling dsDNA into and through the RuvAB complex. HJ branch migration allows RuvC to scan DNA until it finds its consensus sequence, where it cleaves and resolves the cruciform DNA. The chain is Holliday junction branch migration complex subunit RuvA from Streptococcus sanguinis (strain SK36).